Reading from the N-terminus, the 208-residue chain is Thymidylate kinase (208 aa).

11 to 18 (GTEGVGKT) is an ATP binding site.

The protein belongs to the thymidylate kinase family.

The enzyme catalyses dTMP + ATP = dTDP + ADP. In terms of biological role, phosphorylation of dTMP to form dTDP in both de novo and salvage pathways of dTTP synthesis. This Psychrobacter sp. (strain PRwf-1) protein is Thymidylate kinase.